The primary structure comprises 319 residues: Olfactory receptor 51F1 (319 aa).

Topologically, residues 1 to 37 (MLQNQDTMEILSNSTSKFPTFLLTGIPGLESAHVWIS) are extracellular. A helical transmembrane segment spans residues 38–58 (IPFCCFYAIALSGNSVILFVI). The Cytoplasmic segment spans residues 59 to 75 (ITQQSLHEPMYYFLFRL). The chain crosses the membrane as a helical span at residues 76–96 (SATDLGLTVSSLSTTLGILWF). Residues 97 to 106 (EAREISLYSC) lie on the Extracellular side of the membrane. Cys106 and Cys188 are oxidised to a cystine. Residues 107–127 (IVQMFFLHGFTFMESGVLVAT) form a helical membrane-spanning segment. Residues 128–149 (AFDRYVAICDPLRYTTILTNSR) are Cytoplasmic-facing. Residues 150–170 (IIQMGLLMITRAIVLILPLLL) traverse the membrane as a helical segment. Residues 171–211 (LLKPLYFCRMNALSHSYCYHPDVIQLACSDIRANSICGLID) are Extracellular-facing. A helical transmembrane segment spans residues 212–232 (LILTTGIDTPCIVLSYILIIH). Over 233–249 (SVLRIASPEEWHKVFST) the chain is Cytoplasmic. A helical membrane pass occupies residues 250 to 270 (CVSHVGAVAFFYIHMLSLSLV). The Extracellular segment spans residues 271–279 (YRYGRSAPR). Residues 280–300 (VVHSVMANVYLLLPPVLNPII) form a helical membrane-spanning segment. Residues 301 to 319 (DSVKTKQIRKAMLSLLLTK) are Cytoplasmic-facing.

This sequence belongs to the G-protein coupled receptor 1 family.

The protein localises to the cell membrane. Its function is as follows. Odorant receptor. This is Olfactory receptor 51F1 (OR51F1) from Homo sapiens (Human).